Here is a 459-residue protein sequence, read N- to C-terminus: Serine--tRNA ligase (459 aa).

L-serine is bound at residue 254-256 (TAE). ATP contacts are provided by residues 285-287 (RKE) and valine 301. Glutamate 308 is an L-serine binding site. Residue 372–375 (EMVS) coordinates ATP. Threonine 408 serves as a coordination point for L-serine.

Belongs to the class-II aminoacyl-tRNA synthetase family. Type-1 seryl-tRNA synthetase subfamily. As to quaternary structure, homodimer. The tRNA molecule binds across the dimer.

It localises to the cytoplasm. The enzyme catalyses tRNA(Ser) + L-serine + ATP = L-seryl-tRNA(Ser) + AMP + diphosphate + H(+). It catalyses the reaction tRNA(Sec) + L-serine + ATP = L-seryl-tRNA(Sec) + AMP + diphosphate + H(+). It functions in the pathway aminoacyl-tRNA biosynthesis; selenocysteinyl-tRNA(Sec) biosynthesis; L-seryl-tRNA(Sec) from L-serine and tRNA(Sec): step 1/1. Catalyzes the attachment of serine to tRNA(Ser). Is also able to aminoacylate tRNA(Sec) with serine, to form the misacylated tRNA L-seryl-tRNA(Sec), which will be further converted into selenocysteinyl-tRNA(Sec). The chain is Serine--tRNA ligase from Desulfurococcus amylolyticus (strain DSM 18924 / JCM 16383 / VKM B-2413 / 1221n) (Desulfurococcus kamchatkensis).